The primary structure comprises 342 residues: Cytosolic Fe-S cluster assembly factor NBP35 (342 aa).

[4Fe-4S] cluster-binding residues include cysteine 33, cysteine 47, cysteine 50, and cysteine 56. Residue 86 to 93 (GKGGVGKS) coordinates ATP. 2 residues coordinate [4Fe-4S] cluster: cysteine 259 and cysteine 262.

The protein belongs to the Mrp/NBP35 ATP-binding proteins family. NUBP1/NBP35 subfamily. Heterotetramer of 2 NBP35 and 2 CFD1 chains. Requires [4Fe-4S] cluster as cofactor.

It is found in the cytoplasm. Functionally, component of the cytosolic iron-sulfur (Fe/S) protein assembly (CIA) machinery. Required for maturation of extramitochondrial Fe-S proteins. The NBP35-CFD1 heterotetramer forms a Fe-S scaffold complex, mediating the de novo assembly of an Fe-S cluster and its transfer to target apoproteins. This Gibberella zeae (strain ATCC MYA-4620 / CBS 123657 / FGSC 9075 / NRRL 31084 / PH-1) (Wheat head blight fungus) protein is Cytosolic Fe-S cluster assembly factor NBP35.